The chain runs to 635 residues: Frizzled and smoothened-like protein C (635 aa).

The N-terminal stretch at 1 to 20 (MKFKLIIFIIIIYIIKILKS) is a signal peptide. The Extracellular portion of the chain corresponds to 21-244 (EILNEFGYGL…NKWVQMYKMS (224 aa)). The region spanning 32–166 (DENLKCLSFI…LTKYGYTENN (135 aa)) is the FZ domain. 2 disulfides stabilise this stretch: C37-C108 and C50-C101. Residues N65, N141, N156, N185, and N203 are each glycosylated (N-linked (GlcNAc...) asparagine). Residues 245–265 (IVLSTLSFICSIYNIITFGLL) form a helical membrane-spanning segment. The Cytoplasmic portion of the chain corresponds to 266–275 (SKLKSKYNLC). The chain crosses the membrane as a helical span at residues 276–296 (ITFFSVSTVLMSLMDIVTYGI). Over 297–314 (GYEELLCPESGRYAIQSD) the chain is Extracellular. A helical transmembrane segment spans residues 315–335 (VACGVTGAFFHIGITTGVLWW). The Cytoplasmic portion of the chain corresponds to 336 to 356 (TTMSICLYSEVKRFKMISFRY). Residues 357–377 (IIIFNSVISLILLIIPLSGQA) form a helical membrane-spanning segment. Topologically, residues 378 to 398 (FMSGNGSLGCWIRKTWYANGT) are extracellular. N-linked (GlcNAc...) asparagine glycans are attached at residues N382 and N396. The chain crosses the membrane as a helical span at residues 399–419 (FWIPCGISLFIGAICIVLVIY). Residues 420 to 440 (EIFKISRNLSKDNKPLMFQIR) are Cytoplasmic-facing. The helical transmembrane segment at 441-461 (PFLCVLLVGGSFLYLFIFYFN) threads the bilayer. Residues 462–496 (NERNLDKYKAAIPSYVQCLLSSDENGEDCLTDGPG) lie on the Extracellular side of the membrane. A helical transmembrane segment spans residues 497 to 517 (FGAYFTFYFFTRLFGITSFSI). Residues 518 to 635 (YGTSKIARDI…SSKDSNTNSF (118 aa)) lie on the Cytoplasmic side of the membrane. Polar residues predominate over residues 559 to 594 (SISGSNQKRFNRNGSNFNMKQNKSNPNDSISLSVVE). The segment at 559–635 (SISGSNQKRF…SSKDSNTNSF (77 aa)) is disordered. Residues 594–623 (ESTKKQDTENELESNIETKENRSTDISIEN) adopt a coiled-coil conformation. Over residues 623–635 (NTTSSKDSNTNSF) the composition is skewed to low complexity.

This sequence belongs to the G-protein coupled receptor Fz/Smo family.

It is found in the membrane. This chain is Frizzled and smoothened-like protein C (fslC), found in Dictyostelium discoideum (Social amoeba).